The sequence spans 306 residues: Protoheme IX farnesyltransferase (306 aa).

9 helical membrane passes run 28 to 48 (LGLV…AIML), 53 to 73 (FLSS…IMAG), 105 to 125 (ASIL…LFTI), 127 to 147 (IETG…YSVW), 156 to 176 (TIIG…AIEP), 182 to 202 (AWML…ALAI), 227 to 244 (LSML…FFMQ), 246 to 266 (LGTV…LLAI), and 283 to 303 (FVYS…VTLI).

This sequence belongs to the UbiA prenyltransferase family. Protoheme IX farnesyltransferase subfamily. In terms of assembly, interacts with CtaA.

It localises to the cell membrane. The catalysed reaction is heme b + (2E,6E)-farnesyl diphosphate + H2O = Fe(II)-heme o + diphosphate. It participates in porphyrin-containing compound metabolism; heme O biosynthesis; heme O from protoheme: step 1/1. Functionally, converts heme B (protoheme IX) to heme O by substitution of the vinyl group on carbon 2 of heme B porphyrin ring with a hydroxyethyl farnesyl side group. The chain is Protoheme IX farnesyltransferase from Macrococcus caseolyticus (strain JCSC5402) (Macrococcoides caseolyticum).